The following is a 171-amino-acid chain: Peptide methionine sulfoxide reductase MsrA (171 aa).

Residue Cys13 is part of the active site.

This sequence belongs to the MsrA Met sulfoxide reductase family.

It carries out the reaction L-methionyl-[protein] + [thioredoxin]-disulfide + H2O = L-methionyl-(S)-S-oxide-[protein] + [thioredoxin]-dithiol. The enzyme catalyses [thioredoxin]-disulfide + L-methionine + H2O = L-methionine (S)-S-oxide + [thioredoxin]-dithiol. In terms of biological role, has an important function as a repair enzyme for proteins that have been inactivated by oxidation. Catalyzes the reversible oxidation-reduction of methionine sulfoxide in proteins to methionine. The polypeptide is Peptide methionine sulfoxide reductase MsrA (Mycobacterium ulcerans (strain Agy99)).